Here is a 170-residue protein sequence, read N- to C-terminus: Translocon-associated protein subunit gamma (170 aa).

At 1 to 24 (MAEVDEFSAFRHENDVSIEQRIVY) the chain is on the lumenal side. A helical transmembrane segment spans residues 25–45 (FINSLIVALVPVYLYHAIFFM). Residues 46-51 (SIDDHM) lie on the Cytoplasmic side of the membrane. The helical transmembrane segment at 52–72 (IIYGSVTLFAAIVLTFAYNNI) threads the bilayer. Residues 73 to 121 (YRMKRLKLSASREHISIASKNKVGDKKKFAAAQKEVQALVTSHEAIAAS) are Lumenal-facing. The helical transmembrane segment at 122–141 (IMYNNAVFLICVSIFSFIIF) threads the bilayer. The Cytoplasmic segment spans residues 142–145 (KNVP). The helical transmembrane segment at 146 to 168 (LVYNYIISISLGAGLTSFLSTSS) threads the bilayer.

This sequence belongs to the TRAP-gamma family. In terms of assembly, heterotrimer of TRAP-alpha, TRAP-beta and TRAP-gamma.

It is found in the endoplasmic reticulum membrane. TRAP proteins are part of a complex whose function is to bind calcium to the ER membrane and thereby regulate the retention of ER resident proteins. In Dictyostelium discoideum (Social amoeba), this protein is Translocon-associated protein subunit gamma (ssr3).